Consider the following 602-residue polypeptide: Mating pair stabilization protein TraN (602 aa).

The N-terminal stretch at 1 to 18 (MKRILPLILALVAGMAQA) is a signal peptide.

In terms of assembly, interacts with OmpA of recipient cells. Might form multimers. May interact with TraG. In terms of processing, has higher gel mobility under non-reducing conditions, suggesting it has disulfide bonds; a dsbA deletion mutant has considerably less TraN that is still localized in the outer membrane.

It is found in the cell outer membrane. Its function is as follows. Essential for F plasmid conjugative transfer. May interact with the recipient cell surface to stabilize mating pairs initiated by F-pili. May interact with TraG. Transfer requires OmpA and lipopolysaccharide (LPS), which are possibly receptors for TraN. The polypeptide is Mating pair stabilization protein TraN (traN) (Escherichia coli (strain K12)).